Here is a 339-residue protein sequence, read N- to C-terminus: DNA-directed RNA polymerase subunit alpha (339 aa).

The alpha N-terminal domain (alpha-NTD) stretch occupies residues 1–235 (MTIQKNWQEL…DQLNVFVNFE (235 aa)). An alpha C-terminal domain (alpha-CTD) region spans residues 251–339 (FNPAFLKKVD…ELAKRFEDHY (89 aa)).

This sequence belongs to the RNA polymerase alpha chain family. As to quaternary structure, homodimer. The RNAP catalytic core consists of 2 alpha, 1 beta, 1 beta' and 1 omega subunit. When a sigma factor is associated with the core the holoenzyme is formed, which can initiate transcription.

The enzyme catalyses RNA(n) + a ribonucleoside 5'-triphosphate = RNA(n+1) + diphosphate. In terms of biological role, DNA-dependent RNA polymerase catalyzes the transcription of DNA into RNA using the four ribonucleoside triphosphates as substrates. The polypeptide is DNA-directed RNA polymerase subunit alpha (Rhodopseudomonas palustris (strain BisA53)).